Consider the following 414-residue polypeptide: Tryptophan synthase beta chain (414 aa).

Positions 1 to 12 (MVSTISRHDQNK) are enriched in basic and acidic residues. Residues 1–23 (MVSTISRHDQNKNNDYLNQPSKE) form a disordered region. Lysine 109 carries the post-translational modification N6-(pyridoxal phosphate)lysine.

This sequence belongs to the TrpB family. In terms of assembly, tetramer of two alpha and two beta chains. The cofactor is pyridoxal 5'-phosphate.

It catalyses the reaction (1S,2R)-1-C-(indol-3-yl)glycerol 3-phosphate + L-serine = D-glyceraldehyde 3-phosphate + L-tryptophan + H2O. The protein operates within amino-acid biosynthesis; L-tryptophan biosynthesis; L-tryptophan from chorismate: step 5/5. Functionally, the beta subunit is responsible for the synthesis of L-tryptophan from indole and L-serine. In Prochlorococcus marinus (strain MIT 9515), this protein is Tryptophan synthase beta chain.